The sequence spans 431 residues: Adenylosuccinate synthetase (431 aa).

Residues 13 to 19 (GDEGKGK) and 41 to 43 (GHT) each bind GTP. Catalysis depends on Asp-14, which acts as the Proton acceptor. Positions 14 and 41 each coordinate Mg(2+). IMP is bound by residues 14-17 (DEGK), 39-42 (NAGH), Thr-130, Arg-144, Gln-225, Thr-240, and Arg-304. Catalysis depends on His-42, which acts as the Proton donor. 300–306 (ATTGRER) lines the substrate pocket. GTP contacts are provided by residues Arg-306, 332 to 334 (KLD), and 415 to 417 (STG).

Belongs to the adenylosuccinate synthetase family. In terms of assembly, homodimer. Requires Mg(2+) as cofactor.

The protein localises to the cytoplasm. It carries out the reaction IMP + L-aspartate + GTP = N(6)-(1,2-dicarboxyethyl)-AMP + GDP + phosphate + 2 H(+). The protein operates within purine metabolism; AMP biosynthesis via de novo pathway; AMP from IMP: step 1/2. Its function is as follows. Plays an important role in the de novo pathway of purine nucleotide biosynthesis. Catalyzes the first committed step in the biosynthesis of AMP from IMP. The chain is Adenylosuccinate synthetase from Colwellia psychrerythraea (strain 34H / ATCC BAA-681) (Vibrio psychroerythus).